The sequence spans 163 residues: 6,7-dimethyl-8-ribityllumazine synthase 1 (163 aa).

5-amino-6-(D-ribitylamino)uracil is bound by residues F27, 58-60 (ALE), and 87-89 (CVV). 92-93 (ET) provides a ligand contact to (2S)-2-hydroxy-3-oxobutyl phosphate. The active-site Proton donor is the H95. N120 is a binding site for 5-amino-6-(D-ribitylamino)uracil. R134 contributes to the (2S)-2-hydroxy-3-oxobutyl phosphate binding site.

Belongs to the DMRL synthase family.

The catalysed reaction is (2S)-2-hydroxy-3-oxobutyl phosphate + 5-amino-6-(D-ribitylamino)uracil = 6,7-dimethyl-8-(1-D-ribityl)lumazine + phosphate + 2 H2O + H(+). It participates in cofactor biosynthesis; riboflavin biosynthesis; riboflavin from 2-hydroxy-3-oxobutyl phosphate and 5-amino-6-(D-ribitylamino)uracil: step 1/2. Functionally, catalyzes the formation of 6,7-dimethyl-8-ribityllumazine by condensation of 5-amino-6-(D-ribitylamino)uracil with 3,4-dihydroxy-2-butanone 4-phosphate. This is the penultimate step in the biosynthesis of riboflavin. The chain is 6,7-dimethyl-8-ribityllumazine synthase 1 from Rhodopseudomonas palustris (strain ATCC BAA-98 / CGA009).